The chain runs to 270 residues: Formamidopyrimidine-DNA glycosylase (270 aa).

The Schiff-base intermediate with DNA role is filled by P2. The active-site Proton donor is the E3. Catalysis depends on K57, which acts as the Proton donor; for beta-elimination activity. 3 residues coordinate DNA: H90, R109, and R151. The FPG-type zinc-finger motif lies at 236-270 (QVYGRGGKLCMVCSNRLKEVRLGQRSTVYCTQCQR). Catalysis depends on R260, which acts as the Proton donor; for delta-elimination activity.

Belongs to the FPG family. Monomer. Zn(2+) serves as cofactor.

The enzyme catalyses Hydrolysis of DNA containing ring-opened 7-methylguanine residues, releasing 2,6-diamino-4-hydroxy-5-(N-methyl)formamidopyrimidine.. The catalysed reaction is 2'-deoxyribonucleotide-(2'-deoxyribose 5'-phosphate)-2'-deoxyribonucleotide-DNA = a 3'-end 2'-deoxyribonucleotide-(2,3-dehydro-2,3-deoxyribose 5'-phosphate)-DNA + a 5'-end 5'-phospho-2'-deoxyribonucleoside-DNA + H(+). Its function is as follows. Involved in base excision repair of DNA damaged by oxidation or by mutagenic agents. Acts as a DNA glycosylase that recognizes and removes damaged bases. Has a preference for oxidized purines, such as 7,8-dihydro-8-oxoguanine (8-oxoG). Has AP (apurinic/apyrimidinic) lyase activity and introduces nicks in the DNA strand. Cleaves the DNA backbone by beta-delta elimination to generate a single-strand break at the site of the removed base with both 3'- and 5'-phosphates. This Idiomarina loihiensis (strain ATCC BAA-735 / DSM 15497 / L2-TR) protein is Formamidopyrimidine-DNA glycosylase.